The sequence spans 312 residues: Olfactory receptor 4K17 (312 aa).

Residues 1–25 are Extracellular-facing; sequence MKLLNQSQVSEFILLGLTSSQDVEF. Residue Asn5 is glycosylated (N-linked (GlcNAc...) asparagine). Residues 26–49 form a helical membrane-spanning segment; it reads LLFALFSVIYVVTVLGNLLIIVTV. Residues 50 to 57 are Cytoplasmic-facing; sequence FNTPNLNT. A helical transmembrane segment spans residues 58-79; it reads PMYFLLGNLSFVDMTLASFATP. Residues 80-100 lie on the Extracellular side of the membrane; the sequence is KVILNLLKKQKVISFAGCFTQ. Cysteines 97 and 189 form a disulfide. A helical transmembrane segment spans residues 101 to 120; sequence IFLLHLLGGVEMVLLVSMAF. The Cytoplasmic segment spans residues 121-139; it reads DRYVAICKPLHYMTIMNKK. The chain crosses the membrane as a helical span at residues 140 to 158; that stretch reads VCVLLVVTSWLLGLLHSGF. The Extracellular segment spans residues 159 to 195; that stretch reads QIPFAVNLPFCGPNVVDSIFCDLPLVTKLACIDIYFV. Residues 196 to 219 form a helical membrane-spanning segment; that stretch reads QVVIVANSGIISLSCFIILLISYS. The Cytoplasmic portion of the chain corresponds to 220–235; sequence LILITIKNHSPTGQSK. The helical transmembrane segment at 236 to 258 threads the bilayer; the sequence is ARSTLTAHITVVILFFGPCIFIY. Residues 259–269 are Extracellular-facing; sequence IWPFGNHSVDK. N-linked (GlcNAc...) asparagine glycosylation is present at Asn264. Residues 270–289 traverse the membrane as a helical segment; it reads FLAVFYTIITPILNPIIYTL. Over 290-312 the chain is Cytoplasmic; it reads RNKEMKISMKKLWRAFVNSREDT.

It belongs to the G-protein coupled receptor 1 family.

It localises to the cell membrane. Odorant receptor. The sequence is that of Olfactory receptor 4K17 (OR4K17) from Homo sapiens (Human).